The primary structure comprises 555 residues: Solute carrier family 2, facilitated glucose transporter member 10 (555 aa).

Residues 1–15 are Cytoplasmic-facing; sequence MGLSSPTLILAATVS. Residues 16–36 form a helical membrane-spanning segment; sequence LLGGIVFGYELGIISGALLVL. Residues 37–48 lie on the Extracellular side of the membrane; that stretch reads KTVYQLTCFEQE. Residues 49 to 69 form a helical membrane-spanning segment; sequence ALVSAVLFGALLASLIGGIII. At 70-82 the chain is on the cytoplasmic side; sequence DRWGRRTAILASN. The chain crosses the membrane as a helical span at residues 83 to 103; the sequence is LVVLAGSIILIATSTFWWLIV. Residues 104–105 lie on the Extracellular side of the membrane; the sequence is GR. Residues 106–126 form a helical membrane-spanning segment; it reads VTIGFAISISSMACCIYVSEI. The Cytoplasmic segment spans residues 127–132; the sequence is VRPHQR. Residues 133-153 traverse the membrane as a helical segment; the sequence is GMLVSLYETGITVGILISYAM. Residues 154–165 are Extracellular-facing; the sequence is NYFLSGVNESWK. The N-linked (GlcNAc...) asparagine glycan is linked to asparagine 161. A helical transmembrane segment spans residues 166–186; that stretch reads YMFGLAIVPAAFQFISILFLP. Residues 187–240 are Cytoplasmic-facing; that stretch reads SKPHKLNFWEQDTDDGFIELEETGEAGEFKPDTYDRQYTFLDLFRSKDNMRTRT. Residues 241–261 form a helical membrane-spanning segment; that stretch reads LLGLGLVLFQQFTGQPNVLYY. Residue 250–251 coordinates D-glucose; the sequence is QQ. The Extracellular portion of the chain corresponds to 262–277; that stretch reads ASTIFQSVGFQSNSSA. N-linked (GlcNAc...) asparagine glycosylation is present at asparagine 274. The helical transmembrane segment at 278-298 threads the bilayer; it reads VLASVGLGVVKVASTLIAICF. Over 299–305 the chain is Cytoplasmic; the sequence is ADKAGRR. The chain crosses the membrane as a helical span at residues 306–326; that stretch reads ILLLAGCIVMTIAITGIGIVS. The Extracellular portion of the chain corresponds to 327–415; the sequence is FTVKMDSHRD…ASPELPSNYT (89 aa). N-linked (GlcNAc...) asparagine glycans are attached at residues asparagine 344, asparagine 351, asparagine 400, and asparagine 413. Residues 416–436 form a helical membrane-spanning segment; it reads ILNWITLLSMMAFVSAFSIGF. The Cytoplasmic segment spans residues 437–464; that stretch reads GPMTWIVLSEIYPADIRGRAFAFCNSFN. Tryptophan 441 is a D-glucose binding site. The helical transmembrane segment at 465–483 threads the bilayer; that stretch reads WAANLLITLTFLDVIASIG. Over 484 to 485 the chain is Extracellular; it reads LS. The helical transmembrane segment at 486 to 506 threads the bilayer; it reads WTFLLYGVVGLLAIAFIYFFI. Residues 507–555 are Cytoplasmic-facing; that stretch reads PETKGQSLEEIDKQFSTKRILQKRETSKGVGKRPSSGPPYQRIGKASPS. Residues 528–555 form a disordered region; sequence QKRETSKGVGKRPSSGPPYQRIGKASPS.

Belongs to the major facilitator superfamily. Sugar transporter (TC 2.A.1.1) family. Glucose transporter subfamily.

The protein localises to the endomembrane system. It localises to the cytoplasm. The protein resides in the perinuclear region. The catalysed reaction is D-glucose(out) = D-glucose(in). In terms of biological role, facilitative glucose transporter required for the development of the cardiovascular system. The sequence is that of Solute carrier family 2, facilitated glucose transporter member 10 from Xenopus tropicalis (Western clawed frog).